The sequence spans 1001 residues: Open rectifier potassium channel protein 1 (1001 aa).

At 1–6 (MSPNRW) the chain is on the cytoplasmic side. Residues 7-27 (ILLLIFYISYLMFGAAIYYHI) traverse the membrane as a helical segment. N-linked (GlcNAc...) asparagine glycosylation occurs at asparagine 58. Positions 95 to 111 (AFFFAFTVCSTVGYGNI) form an intramembrane region, pore-forming. The chain crosses the membrane as a helical span at residues 120–140 (MIMIAYSVIGIPVNGILFAGL). Residues 141 to 170 (GEYFGRTFEAIYRRYKKYKMSTDMHYVPPQ) lie on the Cytoplasmic side of the membrane. The chain crosses the membrane as a helical span at residues 171–191 (LGLITTVVIALIPGIALFLLL). Residues 208-224 (LYYSYVTTTTIGFGDYV) constitute an intramembrane region (pore-forming). The chain crosses the membrane as a helical span at residues 244 to 264 (IFVIVWFIFSLGYLVMIMTFI). Residues 265–1001 (TRGLQSKKLA…TGSSGAPAEK (737 aa)) are Cytoplasmic-facing. Serine 332, serine 373, serine 562, and serine 565 each carry phosphoserine. Positions 591–668 (SQSYLRNGRG…QAPSARRGSM (78 aa)) are disordered. Phosphoserine is present on residues serine 685, serine 691, and serine 715. Disordered regions lie at residues 768 to 795 (GGAAGGGGISRGSRKQRKMGNAGLEPPQ) and 830 to 1001 (SPTG…PAEK). Positions 832–841 (TGGAATAPAA) are enriched in low complexity. A compositionally biased stretch (polar residues) spans 855-873 (AANQSQITAGPSNAPTVQS). Over residues 911–926 (RRLSLRPSPLARELSP) the composition is skewed to low complexity. Residues 961-983 (RPSTSSTHSPLSRIVQISQAQRK) are compositionally biased toward polar residues. Positions 984–1001 (SSMPSAAATGSSGAPAEK) are enriched in low complexity.

This sequence belongs to the two pore domain potassium channel (TC 1.A.1.8) family. As to expression, widespread expression in adult, strongest expression in muscle, brain and ovary. Also present at low levels in larva and embryo.

Its subcellular location is the membrane. Its function is as follows. Background potassium channel. Rectification is dependent on external potassium concentration. Acts as an outwardly rectifying channel but as external potassium levels increase, this is reversed. The sequence is that of Open rectifier potassium channel protein 1 (Ork1) from Drosophila melanogaster (Fruit fly).